A 382-amino-acid chain; its full sequence is Chaperone protein DnaJ (382 aa).

The region spanning 6–70 is the J domain; sequence DYYEILGLPK…EKRAQYDRFG (65 aa). The segment at 131 to 213 adopts a CR-type zinc-finger fold; sequence GVRKDIDIPR…CGGAGRVRNK (83 aa). Zn(2+) is bound by residues Cys144, Cys147, Cys161, Cys164, Cys187, Cys190, Cys201, and Cys204. CXXCXGXG motif repeat units lie at residues 144–151, 161–168, 187–194, and 201–208; these read CSTCSGTG, CPTCGGTG, CSTCHGRG, and CPVCGGAG. A disordered region spans residues 146 to 168; the sequence is TCSGTGAKPGTSPKRCPTCGGTG. Residues 348-382 are disordered; that stretch reads FENLSKGKKPQEEEKSKAEKHKKGIFEKVKDAFES. Basic and acidic residues predominate over residues 371–382; the sequence is GIFEKVKDAFES.

It belongs to the DnaJ family. Homodimer. Zn(2+) serves as cofactor.

The protein resides in the cytoplasm. Its function is as follows. Participates actively in the response to hyperosmotic and heat shock by preventing the aggregation of stress-denatured proteins and by disaggregating proteins, also in an autonomous, DnaK-independent fashion. Unfolded proteins bind initially to DnaJ; upon interaction with the DnaJ-bound protein, DnaK hydrolyzes its bound ATP, resulting in the formation of a stable complex. GrpE releases ADP from DnaK; ATP binding to DnaK triggers the release of the substrate protein, thus completing the reaction cycle. Several rounds of ATP-dependent interactions between DnaJ, DnaK and GrpE are required for fully efficient folding. Also involved, together with DnaK and GrpE, in the DNA replication of plasmids through activation of initiation proteins. This Methanosarcina acetivorans (strain ATCC 35395 / DSM 2834 / JCM 12185 / C2A) protein is Chaperone protein DnaJ.